A 185-amino-acid chain; its full sequence is Protein-arginine kinase activator protein (185 aa).

Phosphoarginine occurs at positions 115 and 169. In terms of domain architecture, UVR spans 139–174 (RRQIDMLKKELESLIHQEEFENAAHVRDQIRLLEQS).

As to quaternary structure, interacts with McsB. Phosphorylated on Arg residues by McsB.

In terms of biological role, activates the phosphorylation activity of the protein-arginine kinase McsB. Is required for the delocalization of competence proteins from the cell poles. This is Protein-arginine kinase activator protein (mcsA) from Bacillus subtilis (strain 168).